A 245-amino-acid chain; its full sequence is Carbohydrate deacetylase (245 aa).

Mg(2+)-binding residues include H59 and H125.

This sequence belongs to the YdjC deacetylase family. In terms of assembly, homodimer. Mg(2+) is required as a cofactor.

In terms of biological role, probably catalyzes the deacetylation of acetylated carbohydrates an important step in the degradation of oligosaccharides. In Listeria monocytogenes serotype 4a (strain HCC23), this protein is Carbohydrate deacetylase.